We begin with the raw amino-acid sequence, 104 residues long: Large ribosomal subunit protein bL21 (104 aa).

It belongs to the bacterial ribosomal protein bL21 family. Part of the 50S ribosomal subunit. Contacts protein L20.

Functionally, this protein binds to 23S rRNA in the presence of protein L20. The sequence is that of Large ribosomal subunit protein bL21 from Streptococcus mutans serotype c (strain ATCC 700610 / UA159).